Here is a 203-residue protein sequence, read N- to C-terminus: Snake venom metalloproteinase atroxase (203 aa).

Position 1 is a pyrrolidone carboxylic acid (Glu) (Glu-1). N-linked (GlcNAc...) asparagine glycosylation occurs at Asn-5. Residues 9–203 enclose the Peptidase M12B domain; the sequence is RYIELVVVAD…KQYNPQIXNK (195 aa). Glu-12 and Asp-96 together coordinate Ca(2+). His-145 serves as a coordination point for Zn(2+). Glu-146 is an active-site residue. Positions 149 and 155 each coordinate Zn(2+). Cysteines 160 and 167 form a disulfide. Residue Asn-202 participates in Ca(2+) binding.

Belongs to the venom metalloproteinase (M12B) family. P-I subfamily. In terms of assembly, monomer. It depends on Zn(2+) as a cofactor. In terms of processing, the N-terminus is blocked. As to expression, expressed by the venom gland.

It localises to the secreted. The catalysed reaction is Cleavage of 5-His-|-Leu-6, 9-Ser-|-His-10, 10-His-|-Leu-11, 14-Ala-|-Leu-15 and 16-Tyr-|-Leu-17 in insulin B chain.. Inhibited by EDTA and alpha2-macroglobulin. Snake venom zinc metalloprotease that has Aalpha, Bbeta fibrin(ogen)olytic activities. It cleaves the Aalpha chain of fibrinogen first followed by the Bbeta chain and shows no effect on the gamma chain. Does not induce or inhibit platelet aggregation, and is unable to activate plasminogen. Exhibits low lethality when tested on mice. Intravenous administration results in thrombolysis within one hour followed by recanalization. Fibrinogenolytic activity results in a 60% decrease in the rat's plasma fibrinogen level. Histological examination of kidney, liver, heart and lung tissue shows no necrosis nor hemorrhage. The sequence is that of Snake venom metalloproteinase atroxase from Crotalus atrox (Western diamondback rattlesnake).